Reading from the N-terminus, the 339-residue chain is Thermospermine synthase ACAULIS5 (339 aa).

A PABS domain is found at 33 to 270; the sequence is CHWYEETIDD…DTWGWVMASD (238 aa). S-adenosyl 3-(methylsulfanyl)propylamine-binding positions include Gln62, Glu117, Asp137, and 168–169; that span reads DA. Residue Asp186 is the Proton acceptor of the active site.

This sequence belongs to the spermidine/spermine synthase family. Highly expressed in stem internodes and roots. Lower levels in young seedlings before flowering and rosette leaves. Expressed in the vascular tissues. Restricted to procambial and/or provascular cells during primary root development and early leaves development.

The catalysed reaction is S-adenosyl 3-(methylsulfanyl)propylamine + spermidine = thermospermine + S-methyl-5'-thioadenosine + H(+). In terms of biological role, required for correct xylem specification through regulation of the lifetime of the xylem elements. Prevents premature death of the xylem vessel elements. The sequence is that of Thermospermine synthase ACAULIS5 (ACL5) from Arabidopsis thaliana (Mouse-ear cress).